Consider the following 465-residue polypeptide: tRNA-2-methylthio-N(6)-dimethylallyladenosine synthase (465 aa).

The MTTase N-terminal domain maps to 18–136 (RKLYIETYGC…LPNLVGAAEQ (119 aa)). Residues Cys27, Cys63, Cys100, Cys174, Cys178, and Cys181 each coordinate [4Fe-4S] cluster. A Radical SAM core domain is found at 160–392 (GGVHINGFVS…IALQNRLSEE (233 aa)). The 64-residue stretch at 395 to 458 (KRDISKTFEV…SATLFGEVVE (64 aa)) folds into the TRAM domain.

This sequence belongs to the methylthiotransferase family. MiaB subfamily. In terms of assembly, monomer. The cofactor is [4Fe-4S] cluster.

Its subcellular location is the cytoplasm. It carries out the reaction N(6)-dimethylallyladenosine(37) in tRNA + (sulfur carrier)-SH + AH2 + 2 S-adenosyl-L-methionine = 2-methylsulfanyl-N(6)-dimethylallyladenosine(37) in tRNA + (sulfur carrier)-H + 5'-deoxyadenosine + L-methionine + A + S-adenosyl-L-homocysteine + 2 H(+). Functionally, catalyzes the methylthiolation of N6-(dimethylallyl)adenosine (i(6)A), leading to the formation of 2-methylthio-N6-(dimethylallyl)adenosine (ms(2)i(6)A) at position 37 in tRNAs that read codons beginning with uridine. This Porphyromonas gingivalis (strain ATCC 33277 / DSM 20709 / CIP 103683 / JCM 12257 / NCTC 11834 / 2561) protein is tRNA-2-methylthio-N(6)-dimethylallyladenosine synthase.